The chain runs to 194 residues: Inosine triphosphate pyrophosphatase (194 aa).

Alanine 2 carries the N-acetylalanine modification. ITP is bound at residue threonine 14 to lysine 19. Mg(2+) is bound at residue glutamate 44. ITP-binding positions include lysine 56, aspartate 72–threonine 73, lysine 89, phenylalanine 149–aspartate 152, lysine 172, and histidine 177–arginine 178.

This sequence belongs to the HAM1 NTPase family. As to quaternary structure, homodimer. Mg(2+) serves as cofactor. Ubiquitous. Highly expressed in heart, liver, sex glands, thyroid and adrenal gland.

The protein resides in the cytoplasm. It catalyses the reaction ITP + H2O = IMP + diphosphate + H(+). The enzyme catalyses dITP + H2O = dIMP + diphosphate + H(+). It carries out the reaction XTP + H2O = XMP + diphosphate + H(+). The catalysed reaction is N(6)-hydroxy-dATP + H2O = N(6)-hydroxy-dAMP + diphosphate + H(+). In terms of biological role, pyrophosphatase that hydrolyzes the non-canonical purine nucleotides inosine triphosphate (ITP), deoxyinosine triphosphate (dITP) as well as 2'-deoxy-N-6-hydroxylaminopurine triphosphate (dHAPTP) and xanthosine 5'-triphosphate (XTP) to their respective monophosphate derivatives. The enzyme does not distinguish between the deoxy- and ribose forms. Probably excludes non-canonical purines from RNA and DNA precursor pools, thus preventing their incorporation into RNA and DNA and avoiding chromosomal lesions. The chain is Inosine triphosphate pyrophosphatase from Homo sapiens (Human).